The primary structure comprises 128 residues: Ribonuclease P protein component (128 aa).

Belongs to the RnpA family. Consists of a catalytic RNA component (M1 or rnpB) and a protein subunit.

It carries out the reaction Endonucleolytic cleavage of RNA, removing 5'-extranucleotides from tRNA precursor.. Its function is as follows. RNaseP catalyzes the removal of the 5'-leader sequence from pre-tRNA to produce the mature 5'-terminus. It can also cleave other RNA substrates such as 4.5S RNA. The protein component plays an auxiliary but essential role in vivo by binding to the 5'-leader sequence and broadening the substrate specificity of the ribozyme. This is Ribonuclease P protein component from Rhizobium meliloti (strain 1021) (Ensifer meliloti).